Consider the following 593-residue polypeptide: NADH-quinone oxidoreductase subunit C/D 1 (593 aa).

The interval 1-193 (MPWAKEGDLQ…DNLEGLMNYD (193 aa)) is NADH dehydrogenase I subunit C. The interval 217 to 593 (AQIVLNWGPL…IDPVVGETDR (377 aa)) is NADH dehydrogenase I subunit D.

The protein in the N-terminal section; belongs to the complex I 30 kDa subunit family. This sequence in the C-terminal section; belongs to the complex I 49 kDa subunit family. In terms of assembly, NDH-1 is composed of 13 different subunits. Subunits NuoB, CD, E, F, and G constitute the peripheral sector of the complex.

Its subcellular location is the cell inner membrane. It catalyses the reaction a quinone + NADH + 5 H(+)(in) = a quinol + NAD(+) + 4 H(+)(out). In terms of biological role, NDH-1 shuttles electrons from NADH, via FMN and iron-sulfur (Fe-S) centers, to quinones in the respiratory chain. The immediate electron acceptor for the enzyme in this species is believed to be ubiquinone. Couples the redox reaction to proton translocation (for every two electrons transferred, four hydrogen ions are translocated across the cytoplasmic membrane), and thus conserves the redox energy in a proton gradient. In Aquifex aeolicus (strain VF5), this protein is NADH-quinone oxidoreductase subunit C/D 1 (nuoC1).